Here is a 384-residue protein sequence, read N- to C-terminus: Gastrin-releasing peptide receptor (384 aa).

The Extracellular segment spans residues 1 to 39; sequence MDPNNCSHLNLEVDPFLSCNNTFNQTLNPPKMDNWFHPG. N-linked (GlcNAc...) asparagine glycosylation is found at asparagine 5, asparagine 20, and asparagine 24. Residues 40-63 traverse the membrane as a helical segment; that stretch reads IIYVIPAVYGLIIVIGLIGNITLI. Residues 64-77 are Cytoplasmic-facing; it reads KIFCTVKSMRNVPN. Residues 78-97 form a helical membrane-spanning segment; the sequence is LFISSLALGDLLLLVTCAPV. At 98–115 the chain is on the extracellular side; the sequence is DASKYLADRWLFGRIGCK. Cysteine 114 and cysteine 197 form a disulfide bridge. The helical transmembrane segment at 116-137 threads the bilayer; it reads LIPFIQLTSVGVSVFTLTALSA. Topologically, residues 138 to 153 are cytoplasmic; the sequence is DRYKAIVRPMDIQASH. A helical transmembrane segment spans residues 154 to 175; the sequence is ALMKICLKAALIWIVSMLLAIP. Residues 176–209 lie on the Extracellular side of the membrane; the sequence is EAVFSDLHPFHVKDTNQTFISCAPYPHSNELHPK. Residues 210–235 traverse the membrane as a helical segment; the sequence is IHSMASFLVFYIIPLSIISVYYYFIA. At 236-265 the chain is on the cytoplasmic side; sequence RNLIQSAYNLPVEGNIHVKKQIESRKRLAK. The chain crosses the membrane as a helical span at residues 266–286; it reads TVLVFVGLFAFCWLPNHVIYL. Residues 287-299 are Extracellular-facing; it reads YRSYHYSEVDTSM. A helical transmembrane segment spans residues 300–326; sequence LHFITSICARLLAFTNSCVNPFALYLL. Residues 327 to 384 lie on the Cytoplasmic side of the membrane; that stretch reads SKSFRKQFNTQLLCCQPSLLNRSHSTGRSTTCMTSFKSTNPSATFSLINGNICHEGYV. Residue cysteine 340 is the site of S-palmitoyl cysteine attachment. Phosphoserine is present on serine 351.

It belongs to the G-protein coupled receptor 1 family. In terms of tissue distribution, expressed in the hippocampal CA1 region (at protein level).

Its subcellular location is the cell membrane. Functionally, receptor for gastrin-releasing peptide (GRP). Signals via association with G proteins that activate a phosphatidylinositol-calcium second messenger system, resulting in Akt phosphorylation. Contributes to the regulation of food intake. Contributes to the perception of prurient stimuli and transmission of itch signals in the spinal cord that promote scratching behavior, but does not play a role in the perception of pain. Contributes primarily to nonhistaminergic itch sensation. In one study, shown to act in the amygdala as part of an inhibitory network which inhibits memory specifically related to learned fear. In another study, shown to contribute to disinhibition of glutamatergic cells in the auditory cortex via signaling on vasoactive intestinal peptide-expressing cells which leads to enhanced auditory fear memories. Contributes to the induction of sighing through signaling in the pre-Botzinger complex, a cluster of several thousand neurons in the ventrolateral medulla responsible for inspiration during respiratory activity. The protein is Gastrin-releasing peptide receptor (Grpr) of Rattus norvegicus (Rat).